Consider the following 81-residue polypeptide: Mu/omega-theraphotoxin-Hs1a (81 aa).

Positions 1 to 21 are cleaved as a signal peptide; the sequence is MRASMFLALAGLVLLFVVCYA. A propeptide spanning residues 22-48 is cleaved from the precursor; that stretch reads SESEEKEFPRELLFKFFAVDDFKGEER. Disulfide bonds link cysteine 50–cysteine 65, cysteine 57–cysteine 70, and cysteine 64–cysteine 77.

This sequence belongs to the neurotoxin 10 (Hwtx-1) family. 23 (HwTx-I) subfamily. As to expression, expressed by the venom gland.

The protein localises to the secreted. Its function is as follows. Lethal toxin with multiple biological activities. Inhibits voltage-gated TTX-sensitive sodium channels in DRG neurons (IC(50)=55 nM) and also shows activity when directly tested on Nav1.7/SCN9A (IC(50)=25.1-630 nM). Inhibits N-type calcium channels (Cav2.2/CACNA1B (IC(50)=100 nM)). Also blocks neuromuscular transmission. In vivo, intrathecal injected toxin shows analgesic activity in the rat formalin-induced pain model, without induction of motor dysfunction in rats. The polypeptide is Mu/omega-theraphotoxin-Hs1a (Cyriopagopus schmidti (Chinese bird spider)).